A 184-amino-acid polypeptide reads, in one-letter code: Ribosome maturation factor RimM (184 aa).

The PRC barrel domain maps to 111 to 184 (DDEFYWVDLI…HIVVDWGLDY (74 aa)).

Belongs to the RimM family. In terms of assembly, binds ribosomal protein uS19.

It is found in the cytoplasm. Its function is as follows. An accessory protein needed during the final step in the assembly of 30S ribosomal subunit, possibly for assembly of the head region. Essential for efficient processing of 16S rRNA. May be needed both before and after RbfA during the maturation of 16S rRNA. It has affinity for free ribosomal 30S subunits but not for 70S ribosomes. The polypeptide is Ribosome maturation factor RimM (Ralstonia nicotianae (strain ATCC BAA-1114 / GMI1000) (Ralstonia solanacearum)).